Here is a 232-residue protein sequence, read N- to C-terminus: Histone H1.X (232 aa).

An H15 domain is found at H36 to K112. The tract at residues I142 to C232 is disordered. A compositionally biased stretch (basic residues) spans K159 to P197.

Belongs to the histone H1/H5 family.

It is found in the nucleus. The protein localises to the chromosome. The chain is Histone H1.X (hil-1) from Caenorhabditis elegans.